Consider the following 190-residue polypeptide: Abscisic acid receptor PYL2 (190 aa).

The interval Phe-28–Thr-182 is START-like. Abscisate-binding positions include Lys-64, Ala-93–Glu-98, Arg-120–Ser-126, and Glu-147. The Gate loop motif lies at Ser-89 to Ala-93. The short motif at His-119–Leu-121 is the Latch loop element.

The protein belongs to the PYR/PYL/RCAR abscisic acid intracellular receptor family. Homodimer. Binds ABA on one subunit only. Interacts with HAB1, ABI1 and ABI2, and possibly with other PP2Cs. Binds to CARs protein in an ABA-independent manner, both at the plasma membrane and in the nucleus.

The protein resides in the cytoplasm. The protein localises to the nucleus. It is found in the cell membrane. Its function is as follows. Receptor for abscisic acid (ABA) required for ABA-mediated responses such as stomatal closure and germination inhibition. Inhibits the activity of group-A protein phosphatases type 2C (PP2Cs) when activated by ABA. Can be activated by both (-)-ABA and (+)-ABA. This chain is Abscisic acid receptor PYL2 (PYL2), found in Arabidopsis thaliana (Mouse-ear cress).